The primary structure comprises 35 residues: Cytochrome c-550 (35 aa).

C17, C20, and H21 together coordinate heme c.

Post-translationally, binds 1 heme c group covalently per subunit.

Its function is as follows. Monoheme cytochrome which functions as an electron carrier in the reduction of nitrite by membrane vesicles. The sequence is that of Cytochrome c-550 from Virgibacillus halodenitrificans (Bacillus halodenitrificans).